The sequence spans 298 residues: Specificity protein transcription factor 1 (298 aa).

Positions 206–218 (VSSGSESVSARGT) are enriched in low complexity. The disordered stretch occupies residues 206–233 (VSSGSESVSARGTSGSGGTGKYPSSRTA). The C2H2-type zinc finger occupies 260-284 (HNCHIAGCGKVYNKSSHLKAHLRWH).

This sequence belongs to the Sp1 C2H2-type zinc-finger protein family. Expressed in ASJ sensory neurons, pharyngeal cells, rectal cells, intestine, seam cells, and vulval cells.

Its function is as follows. Probable transcription factor which modulates gene expression, thereby acting as an ASJ sensory neuron terminal selector gene. The chain is Specificity protein transcription factor 1 from Caenorhabditis elegans.